Reading from the N-terminus, the 704-residue chain is Tetratricopeptide repeat protein 12 (704 aa).

T71 carries the phosphothreonine modification. TPR repeat units follow at residues 105–138 (ADAL…LKDM), 139–172 (KVLY…DENC), and 173–206 (TKAY…NPKL).

The protein localises to the cytoplasm. Cytoplasmic protein that plays a role in the proper assembly of dynein arm complexes in motile cilia in both respiratory cells and sperm flagella. In Mus musculus (Mouse), this protein is Tetratricopeptide repeat protein 12 (Ttc12).